The chain runs to 112 residues: MADIPAGDYEKGKKVYKQRCLQCHVVDSTATKTGPTLYGVIGRTSGTVAGFDYSAANKSKGVVWTRETLFEYLLNPKKYIPGTKMVFAGLKKADERADLIKYIEVECSKPLA.

The heme c site is built by Cys-20, Cys-23, His-24, and Met-85.

This sequence belongs to the cytochrome c family. Post-translationally, binds 1 heme c group covalently per subunit.

Its subcellular location is the mitochondrion intermembrane space. In terms of biological role, electron carrier protein. The oxidized form of the cytochrome c heme group can accept an electron from the heme group of the cytochrome c1 subunit of cytochrome reductase. Cytochrome c then transfers this electron to the cytochrome oxidase complex, the final protein carrier in the mitochondrial electron-transport chain. The protein is Cytochrome c 2.1 of Caenorhabditis briggsae.